The chain runs to 529 residues: Bifunctional purine biosynthesis protein PurH (529 aa).

Positions 1–148 constitute an MGS-like domain; it reads MQQRRPVRRA…KNHKDVAIVV (148 aa). Lys-287 is modified (N6-acetyllysine).

Belongs to the PurH family.

It carries out the reaction (6R)-10-formyltetrahydrofolate + 5-amino-1-(5-phospho-beta-D-ribosyl)imidazole-4-carboxamide = 5-formamido-1-(5-phospho-D-ribosyl)imidazole-4-carboxamide + (6S)-5,6,7,8-tetrahydrofolate. The catalysed reaction is IMP + H2O = 5-formamido-1-(5-phospho-D-ribosyl)imidazole-4-carboxamide. It functions in the pathway purine metabolism; IMP biosynthesis via de novo pathway; 5-formamido-1-(5-phospho-D-ribosyl)imidazole-4-carboxamide from 5-amino-1-(5-phospho-D-ribosyl)imidazole-4-carboxamide (10-formyl THF route): step 1/1. It participates in purine metabolism; IMP biosynthesis via de novo pathway; IMP from 5-formamido-1-(5-phospho-D-ribosyl)imidazole-4-carboxamide: step 1/1. This is Bifunctional purine biosynthesis protein PurH from Escherichia coli O9:H4 (strain HS).